Reading from the N-terminus, the 398-residue chain is Probable aminomethyltransferase (398 aa).

The protein belongs to the GcvT family. As to quaternary structure, the glycine cleavage system is composed of four proteins: P, T, L and H.

It catalyses the reaction N(6)-[(R)-S(8)-aminomethyldihydrolipoyl]-L-lysyl-[protein] + (6S)-5,6,7,8-tetrahydrofolate = N(6)-[(R)-dihydrolipoyl]-L-lysyl-[protein] + (6R)-5,10-methylene-5,6,7,8-tetrahydrofolate + NH4(+). The glycine cleavage system catalyzes the degradation of glycine. The polypeptide is Probable aminomethyltransferase (Pyrococcus abyssi (strain GE5 / Orsay)).